Consider the following 333-residue polypeptide: Flagellar P-ring protein (333 aa).

A signal peptide spans 1-22; sequence MRRNILSMFLFITLIIYSSIFA.

It belongs to the FlgI family. As to quaternary structure, the basal body constitutes a major portion of the flagellar organelle and consists of four rings (L,P,S, and M) mounted on a central rod.

The protein localises to the periplasm. It localises to the bacterial flagellum basal body. In terms of biological role, assembles around the rod to form the L-ring and probably protects the motor/basal body from shearing forces during rotation. The sequence is that of Flagellar P-ring protein from Fervidobacterium nodosum (strain ATCC 35602 / DSM 5306 / Rt17-B1).